A 214-amino-acid chain; its full sequence is LexA repressor (214 aa).

A DNA-binding region (H-T-H motif) is located at residues 26 to 46 (VREIGEAVGLSSSSTVHSYLK). Residues serine 138 and lysine 175 each act as for autocatalytic cleavage activity in the active site.

It belongs to the peptidase S24 family. In terms of assembly, homodimer.

It catalyses the reaction Hydrolysis of Ala-|-Gly bond in repressor LexA.. In terms of biological role, represses a number of genes involved in the response to DNA damage (SOS response), including recA and lexA. In the presence of single-stranded DNA, RecA interacts with LexA causing an autocatalytic cleavage which disrupts the DNA-binding part of LexA, leading to derepression of the SOS regulon and eventually DNA repair. The chain is LexA repressor from Desulforamulus reducens (strain ATCC BAA-1160 / DSM 100696 / MI-1) (Desulfotomaculum reducens).